A 105-amino-acid polypeptide reads, in one-letter code: Phosphoribosyl-AMP cyclohydrolase (105 aa).

D72 is a Mg(2+) binding site. C73 is a binding site for Zn(2+). The Mg(2+) site is built by D74 and D76. Residues C89 and C96 each contribute to the Zn(2+) site.

The protein belongs to the PRA-CH family. As to quaternary structure, homodimer. Mg(2+) is required as a cofactor. The cofactor is Zn(2+).

The protein localises to the cytoplasm. It carries out the reaction 1-(5-phospho-beta-D-ribosyl)-5'-AMP + H2O = 1-(5-phospho-beta-D-ribosyl)-5-[(5-phospho-beta-D-ribosylamino)methylideneamino]imidazole-4-carboxamide. It participates in amino-acid biosynthesis; L-histidine biosynthesis; L-histidine from 5-phospho-alpha-D-ribose 1-diphosphate: step 3/9. Functionally, catalyzes the hydrolysis of the adenine ring of phosphoribosyl-AMP. This is Phosphoribosyl-AMP cyclohydrolase from Listeria innocua serovar 6a (strain ATCC BAA-680 / CLIP 11262).